The primary structure comprises 611 residues: Aspartate--tRNA ligase, mitochondrial (611 aa).

The N-terminal 30 residues, 1-30, are a transit peptide targeting the mitochondrion; it reads MVLSRLPACLLPLVGTKVSIQGWLVATSRQ. L-aspartate is bound at residue E192. An aspartate region spans residues 216–219; the sequence is QQYK. R238 is an L-aspartate binding site. Residues 238-240 and E502 each bind ATP; that span reads RDE. R509 is an L-aspartate binding site. 554–557 contacts ATP; sequence GFDR.

Belongs to the class-II aminoacyl-tRNA synthetase family. Type 1 subfamily.

Its subcellular location is the mitochondrion. The catalysed reaction is tRNA(Asp) + L-aspartate + ATP = L-aspartyl-tRNA(Asp) + AMP + diphosphate. This chain is Aspartate--tRNA ligase, mitochondrial (msd1), found in Schizosaccharomyces pombe (strain 972 / ATCC 24843) (Fission yeast).